The chain runs to 204 residues: Large ribosomal subunit protein uL4 (204 aa).

Positions 48–75 (HTKGRSDVSGGGKKPWRQKGRGGARAGS) are disordered.

The protein belongs to the universal ribosomal protein uL4 family. As to quaternary structure, part of the 50S ribosomal subunit.

In terms of biological role, one of the primary rRNA binding proteins, this protein initially binds near the 5'-end of the 23S rRNA. It is important during the early stages of 50S assembly. It makes multiple contacts with different domains of the 23S rRNA in the assembled 50S subunit and ribosome. Forms part of the polypeptide exit tunnel. The chain is Large ribosomal subunit protein uL4 from Campylobacter fetus subsp. fetus (strain 82-40).